Consider the following 54-residue polypeptide: Large ribosomal subunit protein bL32 (54 aa).

A disordered region spans residues 1–26; that stretch reads MAVQKNKPTRSKRGMRRSHDSLTAPH. Positions 7-16 are enriched in basic residues; that stretch reads KPTRSKRGMR.

The protein belongs to the bacterial ribosomal protein bL32 family.

This Buchnera aphidicola subsp. Acyrthosiphon pisum (strain 5A) protein is Large ribosomal subunit protein bL32.